The primary structure comprises 108 residues: ATP-dependent Clp protease adapter protein ClpS (108 aa).

It belongs to the ClpS family. In terms of assembly, binds to the N-terminal domain of the chaperone ClpA.

Involved in the modulation of the specificity of the ClpAP-mediated ATP-dependent protein degradation. In Cupriavidus metallidurans (strain ATCC 43123 / DSM 2839 / NBRC 102507 / CH34) (Ralstonia metallidurans), this protein is ATP-dependent Clp protease adapter protein ClpS.